Consider the following 504-residue polypeptide: Procardosin-A (504 aa).

Residues 1-24 form the signal peptide; the sequence is MGTSIKANVLALFLFYLLSPTVFS. The propeptide occupies 25 to 68; sequence VSDDGLIRIGLKKRKVDRIDQLRGRRALMEGNARKDFGFRGTVR. One can recognise a Peptidase A1 domain in the interval 85-501; the sequence is YFGEIGIGTP…DYGNLLVGFA (417 aa). The active site involves Asp103. The cysteines at positions 116 and 122 are disulfide-linked. An N-linked (GlcNAc...) asparagine glycan is attached at Asn139. The RGD motif motif lies at 246 to 248; sequence RGD. A disulfide bridge connects residues Cys277 and Cys281. Asp286 is an active-site residue. A propeptide spans 310–414 (plant-specific insert); sequence GVMNQQCKTV…YANELCEHLS (105 aa). One can recognise a Saposin B-type domain in the interval 311–416; that stretch reads VMNQQCKTVV…NELCEHLSTS (106 aa). Intrachain disulfides connect Cys316–Cys410, Cys341–Cys382, Cys347–Cys379, and Cys424–Cys461. An N-linked (GlcNAc...) asparagine glycan is attached at Asn432. A KGE motif motif is present at residues 455–457; sequence KGE.

It belongs to the peptidase A1 family. As to quaternary structure, heterodimer of a light chain and a heavy chain. An intermediate form (35 kDa and 30 kDa subunits) is produced first, and undergoes proteolytic processing to remove the internal plant-specific insert (PSI) and the propeptide. There is some heterogeniety at the cleavage site. Interacts (via RGD or KGE motifs) with PLD1 (via C2 domain). N-glycosylated. Glycans found at Asn-139 include approximately 6% oligomannose, 82% oligosaccharides of the plant modified type with proximal fucose but without xylose and 6% oligosaccharides of the plant modified type with proximal fucose and xylose. Glycans found at Asn-432 include 14% oligosaccharides of the plant modified type with proximal fucose but without xylose and 86% oligosaccharides of the plant modified type with proximal fucose and xylose. As to expression, detected only in pistils, not in seeds, roots, midribs, bracts, stamens, pollen, vascular or supporting tissues. Detected in seeds. High amounts are detected in the broad outer region of the upper portion of the stigma, towards the lower portion of the stigma it accumulates at the periphery. Within the stigma, expressed mainly in the epidermic papillae, lower levels are found in the cortical parenchyma. Present mainly in epidermal cells within the stye (at protein level). Expressed in young flower buds, and at lower levels in seeds, pollen and bracteas, but not in roots or leaves.

It is found in the microsome membrane. It localises to the protein storage vacuole. Its subcellular location is the secreted. The protein resides in the cell wall. The protein localises to the extracellular space. It is found in the extracellular matrix. Its activity is regulated as follows. Inhibited by the specific aspartic proteinase inhibitors diazoacetyl-noleucine methyl ester and pepstatin. Functionally, aspartic proteinase with a high preference for bonds between hydrophobic residues. Cleaves alpha-lactalbumin but not beta-lactoglobulin. The sequence is that of Procardosin-A from Cynara cardunculus (Cardoon).